The sequence spans 156 residues: Flagellar assembly factor FliW (156 aa).

The protein belongs to the FliW family. Interacts with translational regulator CsrA and flagellin(s).

The protein localises to the cytoplasm. Acts as an anti-CsrA protein, binds CsrA and prevents it from repressing translation of its target genes, one of which is flagellin. Binds to flagellin and participates in the assembly of the flagellum. The chain is Flagellar assembly factor FliW from Syntrophomonas wolfei subsp. wolfei (strain DSM 2245B / Goettingen).